Reading from the N-terminus, the 374-residue chain is Alpha-galactosylglucosyldiacylglycerol synthase (374 aa).

It belongs to the glycosyltransferase group 1 family. Glycosyltransferase 4 subfamily. Requires Mg(2+) as cofactor.

It is found in the cell membrane. The enzyme catalyses a 1,2-diacyl-3-O-(alpha-D-glucopyranosyl)-sn-glycerol + UDP-alpha-D-galactose = a 1,2-diacyl-3-O-[alpha-D-galactopyranosyl-(1-&gt;2)-alpha-D-glucopyranosyl]-sn-glycerol + UDP + H(+). Activated by the negatively charged lipid phosphatidylglycerol (PG). Galactosyltransferase involved in the biosynthesis of the bilayer-forming membrane lipid alpha-galactosyl-glucosyldiacylglycerol which is involved in maintaining constant nonbilayer/bilayer conditions (curvature packing stress). Also involved in the beta-lactam resistance. Catalyzes the transfer of a galactosyl residue from UDP-Gal to alpha-glucosyl-DAG (1,2-diacyl-3-O-(alpha-D-glucopyranosyl)-sn-glycerol) acceptor to form the corresponding galactosyl-glycosyl-DAG product (3-O-alpha-(D-galactopyranosyl-alpha-(1-&gt;2)-D-glucopyranosyl)-1,2-diacyl-sn-glycerol). It can only use UDP-Gal as sugar donor and alpha-glucosyl-DAG is the preferred sugar acceptor. The chain is Alpha-galactosylglucosyldiacylglycerol synthase (cpoA) from Streptococcus pneumoniae (strain ATCC BAA-255 / R6).